A 222-amino-acid polypeptide reads, in one-letter code: 7-cyano-7-deazaguanine synthase (222 aa).

11–21 (FSGGQDSTTCL) is a binding site for ATP. Positions 187, 195, 198, and 201 each coordinate Zn(2+).

Belongs to the QueC family. Zn(2+) serves as cofactor.

The enzyme catalyses 7-carboxy-7-deazaguanine + NH4(+) + ATP = 7-cyano-7-deazaguanine + ADP + phosphate + H2O + H(+). The protein operates within purine metabolism; 7-cyano-7-deazaguanine biosynthesis. Functionally, catalyzes the ATP-dependent conversion of 7-carboxy-7-deazaguanine (CDG) to 7-cyano-7-deazaguanine (preQ(0)). This is 7-cyano-7-deazaguanine synthase from Actinobacillus pleuropneumoniae serotype 5b (strain L20).